Consider the following 183-residue polypeptide: Neuronal synaptobrevin (183 aa).

A compositionally biased stretch (low complexity) spans 1 to 17 (MADAAPAGDAPPNAGAP). The segment at 1 to 32 (MADAAPAGDAPPNAGAPAGEGGDGEIVGGPHN) is disordered. Residues 1 to 106 (MADAAPAGDA…KFWLQNLKMM (106 aa)) lie on the Cytoplasmic side of the membrane. The segment covering 18 to 27 (AGEGGDGEIV) has biased composition (gly residues). One can recognise a v-SNARE coiled-coil homology domain in the interval 41-101 (RLQQTQAQVD…GKLKRKFWLQ (61 aa)). Residues 107-127 (IIMGVIGLVVVGIIANKLGLI) traverse the membrane as a helical segment. The Vesicular portion of the chain corresponds to 128–183 (GGEQPPQYQYPPQYMQPPPPPPQQPAGGQSSLVDAAGAGDGAGAGGSAGAGDHGGV). Residues 135–183 (YQYPPQYMQPPPPPPQQPAGGQSSLVDAAGAGDGAGAGGSAGAGDHGGV) form a disordered region. Residues 141-151 (YMQPPPPPPQQ) show a composition bias toward pro residues. Positions 165–183 (AGDGAGAGGSAGAGDHGGV) are enriched in gly residues.

The protein belongs to the synaptobrevin family. Part of the SNARE core complex containing Snap25 and syntaxin. Specifically expressed in neurons and synapses.

Its subcellular location is the cytoplasmic vesicle. It localises to the secretory vesicle. It is found in the synaptic vesicle membrane. The protein resides in the early endosome membrane. Functionally, involved in the targeting and/or fusion of transport vesicles to their target membrane. Major SNARE protein of synaptic vesicles which mediates fusion of synaptic vesicles to release neurotransmitters. Essential for fast vesicular exocytosis and activity-dependent neurotransmitter release as well as fast endocytosis that mediates rapid reuse of synaptic vesicles. Also involved in a neuron-specific sort-and-degrade mechanism that promotes endolysosomal degradation and is required for neuronal maintenance. The polypeptide is Neuronal synaptobrevin (Drosophila melanogaster (Fruit fly)).